The following is a 169-amino-acid chain: 6,7-dimethyl-8-ribityllumazine synthase (169 aa).

5-amino-6-(D-ribitylamino)uracil is bound by residues Tyr-30, Ala-61–Glu-63, and Cys-90–Ile-92. Residue Glu-95–Thr-96 participates in (2S)-2-hydroxy-3-oxobutyl phosphate binding. Residue His-98 is the Proton donor of the active site. Asn-123 is a binding site for 5-amino-6-(D-ribitylamino)uracil. Arg-137 contacts (2S)-2-hydroxy-3-oxobutyl phosphate.

The protein belongs to the DMRL synthase family.

The enzyme catalyses (2S)-2-hydroxy-3-oxobutyl phosphate + 5-amino-6-(D-ribitylamino)uracil = 6,7-dimethyl-8-(1-D-ribityl)lumazine + phosphate + 2 H2O + H(+). It functions in the pathway cofactor biosynthesis; riboflavin biosynthesis; riboflavin from 2-hydroxy-3-oxobutyl phosphate and 5-amino-6-(D-ribitylamino)uracil: step 1/2. Functionally, catalyzes the formation of 6,7-dimethyl-8-ribityllumazine by condensation of 5-amino-6-(D-ribitylamino)uracil with 3,4-dihydroxy-2-butanone 4-phosphate. This is the penultimate step in the biosynthesis of riboflavin. The protein is 6,7-dimethyl-8-ribityllumazine synthase of Methylorubrum populi (strain ATCC BAA-705 / NCIMB 13946 / BJ001) (Methylobacterium populi).